The chain runs to 821 residues: Glycogen phosphorylase (821 aa).

N6-(pyridoxal phosphate)lysine is present on lysine 667.

The protein belongs to the glycogen phosphorylase family. Pyridoxal 5'-phosphate is required as a cofactor.

It catalyses the reaction [(1-&gt;4)-alpha-D-glucosyl](n) + phosphate = [(1-&gt;4)-alpha-D-glucosyl](n-1) + alpha-D-glucose 1-phosphate. Phosphorylase is an important allosteric enzyme in carbohydrate metabolism. Enzymes from different sources differ in their regulatory mechanisms and in their natural substrates. However, all known phosphorylases share catalytic and structural properties. The polypeptide is Glycogen phosphorylase (glgP) (Haemophilus influenzae (strain ATCC 51907 / DSM 11121 / KW20 / Rd)).